Here is a 127-residue protein sequence, read N- to C-terminus: Anti-adapter protein IraD (127 aa).

The protein belongs to the GpW/Gp25 family. IraD subfamily. As to quaternary structure, interacts with RssB.

It localises to the cytoplasm. In terms of biological role, inhibits RpoS proteolysis by regulating RssB activity, thereby increasing the stability of the sigma stress factor RpoS during oxidative stress. Its effect on RpoS stability is due to its interaction with RssB, which probably blocks the interaction of RssB with RpoS, and the consequent delivery of the RssB-RpoS complex to the ClpXP protein degradation pathway. This is Anti-adapter protein IraD from Escherichia coli (strain UTI89 / UPEC).